The following is a 277-amino-acid chain: Hemin import ATP-binding protein HmuV (277 aa).

Residues 25-260 form the ABC transporter domain; the sequence is IHAQGLNLIL…DIIERVYGWP (236 aa). An ATP-binding site is contributed by 57–64; sequence GPNGAGKS.

The protein belongs to the ABC transporter superfamily. Heme (hemin) importer (TC 3.A.1.14.5) family. In terms of assembly, the complex is composed of two ATP-binding proteins (HmuV), two transmembrane proteins (HmuU) and a solute-binding protein (HmuT).

Its subcellular location is the cell inner membrane. Its function is as follows. Part of the ABC transporter complex HmuTUV involved in hemin import. Responsible for energy coupling to the transport system. This is Hemin import ATP-binding protein HmuV from Photobacterium profundum (strain SS9).